A 231-amino-acid chain; its full sequence is Cytidylate kinase (231 aa).

12-20 (GPSGAGKGT) lines the ATP pocket.

This sequence belongs to the cytidylate kinase family. Type 1 subfamily.

It is found in the cytoplasm. The catalysed reaction is CMP + ATP = CDP + ADP. It carries out the reaction dCMP + ATP = dCDP + ADP. In Shewanella amazonensis (strain ATCC BAA-1098 / SB2B), this protein is Cytidylate kinase.